The following is a 197-amino-acid chain: Nucleoid occlusion factor SlmA (197 aa).

The region spanning 7–67 is the HTH tetR-type domain; sequence INRREHILQC…GLIEFIEESL (61 aa). The segment at residues 30–49 is a DNA-binding region (H-T-H motif); sequence TTAKLAAEVGVSEAALYRHF. Residues 109–136 are a coiled coil; sequence DALLGENERLRSRISQLFSKIETHLKQI.

This sequence belongs to the nucleoid occlusion factor SlmA family. As to quaternary structure, homodimer. Interacts with FtsZ.

The protein localises to the cytoplasm. The protein resides in the nucleoid. Its function is as follows. Required for nucleoid occlusion (NO) phenomenon, which prevents Z-ring formation and cell division over the nucleoid. Acts as a DNA-associated cell division inhibitor that binds simultaneously chromosomal DNA and FtsZ, and disrupts the assembly of FtsZ polymers. SlmA-DNA-binding sequences (SBS) are dispersed on non-Ter regions of the chromosome, preventing FtsZ polymerization at these regions. This Shewanella pealeana (strain ATCC 700345 / ANG-SQ1) protein is Nucleoid occlusion factor SlmA.